We begin with the raw amino-acid sequence, 211 residues long: Interleukin-6 (211 aa).

The first 24 residues, 1–24 (MKFLSARDFQPVAFLGLMLLTATA), serve as a signal peptide directing secretion. Residues C70 and C76 are joined by a disulfide bond. At S79 the chain carries Phosphoserine. C99 and C109 are joined by a disulfide.

The protein belongs to the IL-6 superfamily. As to quaternary structure, component of a hexamer of two molecules each of IL6, IL6R and IL6ST; first binds to IL6R to associate with the signaling subunit IL6ST. Interacts with IL6R (via the N-terminal ectodomain); this interaction may be affected by IL6R-binding with SORL1, hence decreasing IL6 cis signaling. Interacts with SORL1 (via the N-terminal ectodomain); this interaction leads to IL6 internalization and lysosomal degradation. May form a trimeric complex with the soluble SORL1 ectodomain and soluble IL6R receptor; this interaction might stabilize circulating IL6, hence promoting IL6 trans signaling.

It localises to the secreted. Functionally, cytokine with a wide variety of biological functions in immunity, tissue regeneration, and metabolism. Binds to IL6R, then the complex associates to the signaling subunit IL6ST/gp130 to trigger the intracellular IL6-signaling pathway. The interaction with the membrane-bound IL6R and IL6ST stimulates 'classic signaling', whereas the binding of IL6 and soluble IL6R to IL6ST stimulates 'trans-signaling'. Alternatively, 'cluster signaling' occurs when membrane-bound IL6:IL6R complexes on transmitter cells activate IL6ST receptors on neighboring receiver cells. IL6 is a potent inducer of the acute phase response. Rapid production of IL6 contributes to host defense during infection and tissue injury, but excessive IL6 synthesis is involved in disease pathology. In the innate immune response, is synthesized by myeloid cells, such as macrophages and dendritic cells, upon recognition of pathogens through toll-like receptors (TLRs) at the site of infection or tissue injury. In the adaptive immune response, is required for the differentiation of B-cells into immunoglolin-secreting cells. Plays a major role in the differentiation of CD4(+) T cell subsets. Essential factor for the development of T follicular helper (Tfh) cells that are required for the induction of germinal-center formation. Together with IL21, controls the early generation of Tfh cells and are critical for an effective antibody response to acute viral infection. Required to drive naive CD4(+) T cells to the Th17 lineage, through 'cluster signaling' by dendritic cells. Also required for proliferation of myeloma cells and the survival of plasmablast cells. In terms of biological role, acts as an essential factor in bone homeostasis and on vessels directly or indirectly by induction of VEGF, resulting in increased angiogenesis activity and vascular permeability. Induces, through 'trans-signaling' and synergistically with IL1B and TNF, the production of VEGF. Involved in metabolic controls, is discharged into the bloodstream after muscle contraction increasing lipolysis and improving insulin resistance. 'Trans-signaling' in central nervous system regulates energy and glucose homeostasis. Mediates, through GLP-1, crosstalk between insulin-sensitive tissues, intestinal L cells and pancreatic islets to adapt to changes in insulin demand. Also acts as a myokine. Plays a protective role during liver injury, being required for maintenance of tissue regeneration. Also has a pivotal role in iron metabolism by regulating HAMP/hepcidin expression upon inflammation or bacterial infection. Through activation of IL6ST-YAP-NOTCH pathway, induces inflammation-induced epithelial regeneration. This is Interleukin-6 from Rattus norvegicus (Rat).